The following is a 439-amino-acid chain: GTPase Der (439 aa).

EngA-type G domains follow at residues 3 to 167 (PLVA…PKSS) and 176 to 351 (TRIA…AQYS). GTP is bound by residues 9-16 (GRPNVGKS), 56-60 (DTGGF), 119-122 (NKVD), 182-189 (GRPNVGKS), 229-233 (DTAGI), and 294-297 (NKWD). The 85-residue stretch at 352–436 (KRVSTSDLNR…PLKIIFRGRD (85 aa)) folds into the KH-like domain.

This sequence belongs to the TRAFAC class TrmE-Era-EngA-EngB-Septin-like GTPase superfamily. EngA (Der) GTPase family. As to quaternary structure, associates with the 50S ribosomal subunit.

Functionally, GTPase that plays an essential role in the late steps of ribosome biogenesis. The sequence is that of GTPase Der from Geobacter metallireducens (strain ATCC 53774 / DSM 7210 / GS-15).